Here is a 138-residue protein sequence, read N- to C-terminus: Single-stranded DNA-binding protein 4 (138 aa).

The 104-residue stretch at 1 to 104 folds into the SSB domain; that stretch reads MINNVVLIGR…VVADSFQILE (104 aa). The segment at 107–138 is disordered; it reads DNSTNQASMDDQLPPSFGNSQPMDISDDDLPF. The short motif at 133–138 is the Important for interaction with partner proteins element; that stretch reads DDDLPF.

Homotetramer.

Functionally, plays an important role in DNA replication, recombination and repair. Binds to ssDNA and to an array of partner proteins to recruit them to their sites of action during DNA metabolism. The chain is Single-stranded DNA-binding protein 4 (ssb4) from Streptococcus agalactiae serotype V (strain ATCC BAA-611 / 2603 V/R).